Consider the following 120-residue polypeptide: Large ribosomal subunit protein uL18 (120 aa).

The protein belongs to the universal ribosomal protein uL18 family. Part of the 50S ribosomal subunit; part of the 5S rRNA/L5/L18/L25 subcomplex. Contacts the 5S and 23S rRNAs.

Its function is as follows. This is one of the proteins that bind and probably mediate the attachment of the 5S RNA into the large ribosomal subunit, where it forms part of the central protuberance. The chain is Large ribosomal subunit protein uL18 from Azorhizobium caulinodans (strain ATCC 43989 / DSM 5975 / JCM 20966 / LMG 6465 / NBRC 14845 / NCIMB 13405 / ORS 571).